A 254-amino-acid chain; its full sequence is K88 minor fimbrial subunit FaeI (254 aa).

The N-terminal stretch at 1–20 (MKKVTLFLFVVSLLPSTVLA) is a signal peptide.

Belongs to the fimbrial K88 protein family.

It is found in the fimbrium. Functionally, K88 minor fimbrial subunit, plays an essential role in the biogenesis of the K88 fimbriae. Fimbriae (also called pili), are polar filaments radiating from the surface of the bacterium to a length of 0.5-1.5 micrometers and numbering 100-300 per cell. They enable bacteria to colonize the epithelium of specific host organs. This chain is K88 minor fimbrial subunit FaeI (faeI), found in Escherichia coli.